The sequence spans 308 residues: tRNA pseudouridine synthase B (308 aa).

The active-site Nucleophile is the aspartate 46.

It belongs to the pseudouridine synthase TruB family. Type 1 subfamily.

It carries out the reaction uridine(55) in tRNA = pseudouridine(55) in tRNA. Responsible for synthesis of pseudouridine from uracil-55 in the psi GC loop of transfer RNAs. This is tRNA pseudouridine synthase B from Marinomonas sp. (strain MWYL1).